Consider the following 868-residue polypeptide: Aconitate hydratase B (868 aa).

Substrate-binding positions include Arg192, 235-237 (SSR), 404-406 (QDT), and Ser488. Residues Cys700, Cys758, and Cys761 each coordinate [4Fe-4S] cluster. 2 residues coordinate substrate: Arg780 and Arg785.

The protein belongs to the aconitase/IPM isomerase family. As to quaternary structure, monomer. The cofactor is [4Fe-4S] cluster.

The enzyme catalyses citrate = D-threo-isocitrate. It catalyses the reaction (2S,3R)-3-hydroxybutane-1,2,3-tricarboxylate = 2-methyl-cis-aconitate + H2O. Its pathway is carbohydrate metabolism; tricarboxylic acid cycle; isocitrate from oxaloacetate: step 2/2. It functions in the pathway organic acid metabolism; propanoate degradation. In terms of biological role, involved in the catabolism of short chain fatty acids (SCFA) via the tricarboxylic acid (TCA)(acetyl degradation route) and probably via the 2-methylcitrate cycle I (propionate degradation route). Catalyzes the reversible isomerization of citrate to isocitrate via cis-aconitate. Catalyzes the hydration of 2-methyl-cis-aconitate to yield (2R,3S)-2-methylisocitrate. The apo form of AcnB functions as a RNA-binding regulatory protein. The polypeptide is Aconitate hydratase B (acnB) (Synechocystis sp. (strain ATCC 27184 / PCC 6803 / Kazusa)).